Consider the following 45-residue polypeptide: Caltrin-like protein 1 (45 aa).

Residues 8 to 45 (DSDRPNCSRYVQHLYMCTKELDPVCGTDGHTYGNRSIF) enclose the Kazal-like domain. 2 N-linked (GlcNAc...) asparagine glycosylation sites follow: Asn13 and Asn41.

Glycosylated.

The protein localises to the secreted. Functionally, inhibits calcium transport into spermatozoa. The polypeptide is Caltrin-like protein 1 (Cavia porcellus (Guinea pig)).